The following is a 187-amino-acid chain: UPF0301 protein PBPRA3139 (187 aa).

Belongs to the UPF0301 (AlgH) family.

This Photobacterium profundum (strain SS9) protein is UPF0301 protein PBPRA3139.